The following is a 217-amino-acid chain: Probable cutinase 3 (217 aa).

The signal sequence occupies residues 1–17; the sequence is MSLRSLFVAGLATLALA. 2 cysteine pairs are disulfide-bonded: cysteine 39–cysteine 118 and cysteine 65–cysteine 79. The Nucleophile role is filled by serine 129. A disulfide bridge connects residues cysteine 180 and cysteine 187. Aspartate 184 is an active-site residue. Histidine 197 functions as the Proton donor/acceptor in the catalytic mechanism.

This sequence belongs to the cutinase family.

The protein resides in the secreted. The catalysed reaction is cutin + H2O = cutin monomers.. Its function is as follows. Catalyzes the hydrolysis of complex carboxylic polyesters found in the cell wall of plants. Degrades cutin, a macromolecule that forms the structure of the plant cuticle. This Neosartorya fischeri (strain ATCC 1020 / DSM 3700 / CBS 544.65 / FGSC A1164 / JCM 1740 / NRRL 181 / WB 181) (Aspergillus fischerianus) protein is Probable cutinase 3.